The chain runs to 512 residues: Zinc finger CCCH-type with G patch domain-containing protein (512 aa).

A C3H1-type zinc finger spans residues Gln159–Leu186. The segment at Leu255–Val280 is disordered. Residues Glu256–Val279 are compositionally biased toward acidic residues. Positions Thr308–Gln354 constitute a G-patch domain. Residues Ser407–Ser417 show a composition bias toward low complexity. Residues Ser407–Cys432 form a disordered region.

It localises to the nucleus. Functionally, transcription repressor. This Aedes aegypti (Yellowfever mosquito) protein is Zinc finger CCCH-type with G patch domain-containing protein.